The chain runs to 313 residues: Ribose-phosphate pyrophosphokinase (313 aa).

ATP-binding positions include 37-39 and 96-97; these read DGE and RQ. Mg(2+) contacts are provided by histidine 131 and aspartate 170. Lysine 193 is an active-site residue. D-ribose 5-phosphate is bound by residues arginine 195, aspartate 219, and 223–227; that span reads DTAGT.

It belongs to the ribose-phosphate pyrophosphokinase family. Class I subfamily. Homohexamer. Requires Mg(2+) as cofactor.

It is found in the cytoplasm. It carries out the reaction D-ribose 5-phosphate + ATP = 5-phospho-alpha-D-ribose 1-diphosphate + AMP + H(+). It participates in metabolic intermediate biosynthesis; 5-phospho-alpha-D-ribose 1-diphosphate biosynthesis; 5-phospho-alpha-D-ribose 1-diphosphate from D-ribose 5-phosphate (route I): step 1/1. Involved in the biosynthesis of the central metabolite phospho-alpha-D-ribosyl-1-pyrophosphate (PRPP) via the transfer of pyrophosphoryl group from ATP to 1-hydroxyl of ribose-5-phosphate (Rib-5-P). This chain is Ribose-phosphate pyrophosphokinase, found in Pseudomonas syringae pv. tomato (strain ATCC BAA-871 / DC3000).